The following is an 82-amino-acid chain: ATP synthase subunit c (82 aa).

The next 2 helical transmembrane spans lie at Met5–Ile25 and Phe55–Phe75.

This sequence belongs to the ATPase C chain family. As to quaternary structure, F-type ATPases have 2 components, F(1) - the catalytic core - and F(0) - the membrane proton channel. F(1) has five subunits: alpha(3), beta(3), gamma(1), delta(1), epsilon(1). F(0) has three main subunits: a(1), b(2) and c(10-14). The alpha and beta chains form an alternating ring which encloses part of the gamma chain. F(1) is attached to F(0) by a central stalk formed by the gamma and epsilon chains, while a peripheral stalk is formed by the delta and b chains.

It is found in the cell membrane. F(1)F(0) ATP synthase produces ATP from ADP in the presence of a proton or sodium gradient. F-type ATPases consist of two structural domains, F(1) containing the extramembraneous catalytic core and F(0) containing the membrane proton channel, linked together by a central stalk and a peripheral stalk. During catalysis, ATP synthesis in the catalytic domain of F(1) is coupled via a rotary mechanism of the central stalk subunits to proton translocation. In terms of biological role, key component of the F(0) channel; it plays a direct role in translocation across the membrane. A homomeric c-ring of between 10-14 subunits forms the central stalk rotor element with the F(1) delta and epsilon subunits. In Carboxydothermus hydrogenoformans (strain ATCC BAA-161 / DSM 6008 / Z-2901), this protein is ATP synthase subunit c.